The chain runs to 412 residues: Argininosuccinate synthase (412 aa).

An ATP-binding site is contributed by 10–18 (AYSGGLDTS). Residue Tyr-89 participates in L-citrulline binding. Residue Gly-119 participates in ATP binding. Positions 121, 125, and 126 each coordinate L-aspartate. An L-citrulline-binding site is contributed by Asn-125. L-citrulline is bound by residues Arg-129, Ser-177, Glu-261, and Tyr-273.

The protein belongs to the argininosuccinate synthase family. Type 1 subfamily. Homotetramer.

Its subcellular location is the cytoplasm. It carries out the reaction L-citrulline + L-aspartate + ATP = 2-(N(omega)-L-arginino)succinate + AMP + diphosphate + H(+). It participates in amino-acid biosynthesis; L-arginine biosynthesis; L-arginine from L-ornithine and carbamoyl phosphate: step 2/3. This chain is Argininosuccinate synthase, found in Bifidobacterium longum (strain NCC 2705).